A 631-amino-acid chain; its full sequence is Fatty acid ABC transporter ATP-binding/permease protein (631 aa).

Residues 1 to 11 are compositionally biased toward low complexity; that stretch reads MTAPPGARPRA. Residues 1–20 form a disordered region; that stretch reads MTAPPGARPRAASPPPNMRS. 3 consecutive transmembrane segments (helical) span residues 42 to 62, 123 to 143, and 205 to 225; these read IAVITLGIAGTTIGVIVPRIL, LALALALYLAAALMIWAQARL, and ILTMVAVLAMMVSISGLLALI. The 324-residue stretch at 42 to 365 folds into the ABC transmembrane type-1 domain; the sequence is IAVITLGIAG…LAGMYNALQS (324 aa). The region spanning 397–631 is the ABC transporter domain; sequence VEFEHVNFAY…RGVYYQMTRA (235 aa). 430–437 contacts ATP; that stretch reads GPTGAGKT.

Belongs to the ABC transporter superfamily. Lipid exporter (TC 3.A.1.106) family.

The protein resides in the cell inner membrane. In terms of biological role, ABC transporter involved in fatty acid import. Transmembrane domains (TMD) form a pore in the membrane and the ATP-binding domain (NBD) is responsible for energy generation. In Mycobacterium bovis (strain ATCC BAA-935 / AF2122/97), this protein is Fatty acid ABC transporter ATP-binding/permease protein.